We begin with the raw amino-acid sequence, 185 residues long: Tetratricopeptide repeat protein 36 homolog (185 aa).

TPR repeat units lie at residues 53–86, 88–119, and 125–158; these read SREL…AQRA, VLNN…ASDQ, and CHAH…GSKF.

This sequence belongs to the TTC36 family.

The chain is Tetratricopeptide repeat protein 36 homolog from Drosophila pseudoobscura pseudoobscura (Fruit fly).